The following is a 387-amino-acid chain: Lactosylceramide alpha-2,3-sialyltransferase (387 aa).

The Cytoplasmic portion of the chain corresponds to Met1–Ser33. The chain crosses the membrane as a helical; Signal-anchor for type II membrane protein span at residues Leu34–Ile54. The Extracellular portion of the chain corresponds to Leu55 to His387. Residues Asn58 and Asn208 are each glycosylated (N-linked (GlcNAc...) asparagine). Cysteines 167 and 325 form a disulfide.

Belongs to the glycosyltransferase 29 family.

It is found in the golgi apparatus membrane. The enzyme catalyses a beta-D-Gal-(1-&gt;4)-beta-D-Glc-(1&lt;-&gt;1)-Cer(d18:1(4E)) + CMP-N-acetyl-beta-neuraminate = a ganglioside GM3 (d18:1(4E)) + CMP + H(+). It carries out the reaction ganglioside GA2 (d18:1(4E)/18:0) + CMP-N-acetyl-beta-neuraminate = ganglioside GM2 (d18:1(4E)/18:0) + CMP + H(+). The catalysed reaction is a beta-D-Gal-(1&lt;-&gt;1')-ceramide + CMP-N-acetyl-beta-neuraminate = N-acetyl-alpha-neuraminosyl-(2-&gt;3)-beta-D-galactosyl-(1&lt;-&gt;1')-ceramide + CMP + H(+). It catalyses the reaction ganglioside GA1 (d18:1(4E)/18:0) + CMP-N-acetyl-beta-neuraminate = ganglioside GM1 (d18:1(4E)/18:0) + CMP + H(+). In terms of biological role, transfers the sialyl group (N-acetyl-alpha-neuraminyl or NeuAc) from CMP-NeuAc to the non-reducing terminal galactose (Gal) of glycosphingolipids forming gangliosides (important molecules involved in the regulation of multiple cellular processes, including cell proliferation and differentiation, apoptosis, embryogenesis, development, and oncogenesis). Mainly involved in the biosynthesis of ganglioside GM3 but can also use different glycolipids as substrate acceptors such as D-galactosylceramide (GalCer), asialo-GM2 (GA2) and asialo-GM1 (GA1), although less preferentially than beta-D-Gal-(1-&gt;4)-beta-D-Glc-(1&lt;-&gt;1)-Cer (LacCer). This is Lactosylceramide alpha-2,3-sialyltransferase (St3gal5) from Rattus norvegicus (Rat).